The chain runs to 102 residues: Polymeric immunoglobulin receptor (102 aa).

Interacts (mainly via CDR1-like domain) with dimeric IgA. Interacts (mainly via CDR2-like domain) with pentameric IgM. Either free or part of the secretory IgA (sIgA) complex that consists of two, four or five IgA monomers, and two additional non-Ig polypeptides, namely the JCHAIN and the secretory component (the proteolytic product of PIGR). Free secretory component interacts with bacterial antigens toxA of C.difficile and eaeA of E.coli. In terms of processing, N-glycosylated. N-glycosylation is required for anchoring IgA molecules to mucus, but is not necessary for Ig binding.

Its subcellular location is the cell membrane. The protein resides in the secreted. Mediates selective transcytosis of polymeric IgA and IgM across mucosal epithelial cells. Binds polymeric IgA and IgM at the basolateral surface of epithelial cells. The complex is then transported across the cell to be secreted at the apical surface. During this process, a cleavage occurs that separates the extracellular (known as the secretory component) from the transmembrane segment. Through its N-linked glycans ensures anchoring of secretory IgA (sIgA) molecules to mucus lining the epithelial surface to neutralize extracellular pathogens. On its own (free form) may act as a non-specific microbial scavenger to prevent pathogen interaction with epithelial cells. This chain is Polymeric immunoglobulin receptor (PIGR), found in Sus scrofa (Pig).